The primary structure comprises 115 residues: U3-lycotoxin-Ls1a (115 aa).

Positions 1-20 (MKFVLLFGVLLVTFFSYSSA) are cleaved as a signal peptide. A propeptide spanning residues 21 to 44 (EMLDDFDQADEDELLSLIEKGEAR) is cleaved from the precursor. Intrachain disulfides connect C48–C63, C55–C72, C62–C87, and C74–C85.

This sequence belongs to the neurotoxin 19 (CSTX) family. 01 subfamily. Expressed by the venom gland.

It localises to the secreted. The polypeptide is U3-lycotoxin-Ls1a (Lycosa singoriensis (Wolf spider)).